The primary structure comprises 340 residues: Major histocompatibility complex class I-related gene protein (340 aa).

The first 22 residues, 1 to 22, serve as a signal peptide directing secretion; that stretch reads MGELMAFLLPLIIVLMVKHSNS. Positions 23–109 are alpha-1; the sequence is RTHSLRYFRL…KRLQRHYNHS (87 aa). The interval 23-201 is antigen-binding cleft; that stretch reads RTHSLRYFRL…EYGKDTLQRT (179 aa). The Extracellular portion of the chain corresponds to 23 to 302; that stretch reads RTHSLRYFRL…QESEAIPLVM (280 aa). Residues Y29 and R31 each contribute to the 8-(9H-purin-6-yl)-2-oxa-8-azabicyclo[3.3.1]nona-3,6-diene-4,6-dicarbaldehyde site. Positions 31, 46, and 65 each coordinate 5-(2-oxoethylideneamino)-6-(D-ribitylamino)uracil. R31, S46, and K65 together coordinate 5-(2-oxopropylideneamino)-6-(D-ribitylamino)uracil. 7-hydroxy-6-methyl-8-(1-D-ribityl)lumazine contacts are provided by R31, S46, and K65. 8-(9H-purin-6-yl)-2-oxa-8-azabicyclo[3.3.1]nona-3,6-diene-4,6-dicarbaldehyde is bound by residues K65 and H80. Residue K65 coordinates 2-amino-4-oxopteridine-6-carbaldehyde. K65 provides a ligand contact to pyridoxal. An N-linked (GlcNAc...) asparagine glycan is attached at N107. An alpha-2 region spans residues 110 to 201; that stretch reads GSHTYQRMIG…EYGKDTLQRT (92 aa). R116 contributes to the 8-(9H-purin-6-yl)-2-oxa-8-azabicyclo[3.3.1]nona-3,6-diene-4,6-dicarbaldehyde binding site. 5-(2-oxoethylideneamino)-6-(D-ribitylamino)uracil-binding residues include R116, Y174, and Q175. 3 residues coordinate 5-(2-oxopropylideneamino)-6-(D-ribitylamino)uracil: R116, Y174, and Q175. Residues R116, Y174, and Q175 each contribute to the 7-hydroxy-6-methyl-8-(1-D-ribityl)lumazine site. 2 disulfide bridges follow: C120–C183 and C222–C278. Residues 202 to 293 are alpha-3; sequence EPPLVRVNRK…GVHMVLQVPQ (92 aa). The 80-residue stretch at 203 to 282 folds into the Ig-like C1-type domain; sequence PPLVRVNRKE…SNLYSCHVEH (80 aa). The connecting peptide stretch occupies residues 294 to 302; sequence ESEAIPLVM. The chain crosses the membrane as a helical span at residues 303-323; that stretch reads KAVSGSIVFVIVLTGVGVLVW. Over 324 to 340 the chain is Cytoplasmic; sequence RRRPREQNGAVYLPTPD.

Belongs to the MHC class I family. Heterotrimer that consists of MR1, B2M and metabolite antigen. Major classes of metabolite ligands presented by MR1 include riboflavin-related antigens, pyrimidines and ribityl lumazines, nucleobase adducts and folate derivatives. Forms reversible covalent Schiff base complexes with microbial pyrimidine-based metabolite, which serves as a molecular switch triggering complete folding, stable association with B2M and translocation of the ternary complex from endoplasmic reticulum to the plasma membrane. Alternatively, forms non-Schiff base complexes with ribityl lumazines. On antigen-presenting cells, the ternary complex interacts with TCR on MR1-restricted T cells. Interacts with TAPBP and TAPBPL chaperones in the endoplasmic reticulum. TAPBP associated or not with MHC class I peptide loading complex binds ligand-free MR1 or MR1-B2M complex, providing for stable MR1 pools ready for metabolite antigen processing. TAPBPL interacts with MR1 in a ligand-independent way; this interaction may stabilize MR1 pool and facilitate ligand loading and dissociation. Structurally, MR1-B2M heterodimer adopts a topology similar to classical MHC class I molecules, with alpha-1 and alpha-2 domains of MR1 forming the antigen-binding cleft composed of two alpha-helices resting on a floor of 7-stranded anti-parallel beta-pleated sheet. MR1-B2M heterodimer (via alpha-helices) interacts with TCR (via CDR domains). N-glycosylated.

The protein localises to the cell membrane. It is found in the endoplasmic reticulum membrane. It localises to the golgi apparatus membrane. The protein resides in the early endosome membrane. Its subcellular location is the late endosome membrane. Antigen-presenting molecule specialized in displaying microbial pyrimidine-based metabolites to alpha-beta T cell receptors (TCR) on innate-type mucosal-associated invariant T (MAIT) cells. In complex with B2M preferentially presents riboflavin-derived metabolites to semi-invariant TCRs on MAIT cells, guiding immune surveillance of the microbial metabolome at mucosal epithelial barriers. Signature pyrimidine-based microbial antigens are generated via non-enzymatic condensation of metabolite intermediates of the riboflavin pathway with by-products arising from other metabolic pathways such as glycolysis. Typical potent antigenic metabolites are 5-(2-oxoethylideneamino)-6-D-ribitylaminouracil (5-OE-RU) and 5-(2-oxopropylideneamino)-6-D-ribitylaminouracil (5-OP-RU), products of condensation of 5-amino-6-D-ribityaminouracil (5-A-RU) with glyoxal or methylglyoxal by-products, respectively. May present microbial antigens to various MAIT cell subsets, providing for unique recognition of diverse microbes, including pathogens that do not synthesize riboflavin. Upon antigen recognition, elicits rapid innate-type MAIT cell activation to eliminate pathogenic microbes by directly killing infected cells. During T cell development, drives thymic selection and post-thymic terminal differentiation of MAIT cells in a process dependent on commensal microflora. Acts as an immune sensor of cancer cell metabolome. May present a tumor-specific or -associated metabolite essential for cancer cell survival to a pan-cancer TCR on a non-MAIT CD8-positive T cell clone, triggering T cell-mediated killing of a wide range of cancer cell types. May present tumor-enriched pyridoxal and pyridoxal 5'-phosphate antigens, enabling preferential recognition of cancer cells. Presents nucleobase carbonyl adducts generated during oxidative stress. Captures M3Ade, a nucleobase adduct composed of one adenine modified by a malondialdehyde trimer, for recognition by MR1-restricted T cell clones expressing a polyclonal TCR repertoire. The polypeptide is Major histocompatibility complex class I-related gene protein (Pongo pygmaeus (Bornean orangutan)).